Reading from the N-terminus, the 256-residue chain is Small ribosomal subunit protein eS1 (256 aa).

The span at 1 to 18 (MAVGKNKRLSKGKKGLKK) shows a compositional bias: basic residues. The disordered stretch occupies residues 1 to 20 (MAVGKNKRLSKGKKGLKKRT). Alanine 2 is modified (N-acetylalanine; partial).

This sequence belongs to the eukaryotic ribosomal protein eS1 family. As to quaternary structure, component of the small ribosomal subunit. Mature ribosomes consist of a small (40S) and a large (60S) subunit. The 40S subunit contains about 33 different proteins and 1 molecule of RNA (18S). The 60S subunit contains about 49 different proteins and 3 molecules of RNA (25S, 5.8S and 5S).

It localises to the cytoplasm. In Talaromyces marneffei (strain ATCC 18224 / CBS 334.59 / QM 7333) (Penicillium marneffei), this protein is Small ribosomal subunit protein eS1 (rps1).